The following is a 279-amino-acid chain: uncharacterized protein (279 aa).

Residues Arg-60–Asn-92 are disordered. The span at Asp-70 to Ile-85 shows a compositional bias: polar residues. 3 consecutive transmembrane segments (helical) span residues Ile-156–Asn-176, Ile-202–Leu-222, and Phe-237–Ile-257.

Its subcellular location is the cell membrane. This is an uncharacterized protein from Mycoplasma genitalium (strain ATCC 33530 / DSM 19775 / NCTC 10195 / G37) (Mycoplasmoides genitalium).